The sequence spans 388 residues: AdoMet-dependent heme synthase (388 aa).

Over residues 1 to 12 the composition is skewed to low complexity; the sequence is MHNANHPHGNGH. The interval 1–29 is disordered; sequence MHNANHPHGNGHPAEKKGMGAHSGAMNMP. Positions 34–257 constitute a Radical SAM core domain; the sequence is DGSPACRLIA…TSMHLKATCA (224 aa). 3 residues coordinate [4Fe-4S] cluster: C50, C54, and C57.

It belongs to the radical SAM superfamily. Requires [4Fe-4S] cluster as cofactor.

The enzyme catalyses Fe-coproporphyrin III + 2 S-adenosyl-L-methionine = heme b + 2 5'-deoxyadenosine + 2 L-methionine + 2 CO2. Its pathway is porphyrin-containing compound metabolism; protoheme biosynthesis. Functionally, involved in siroheme-dependent heme b biosynthesis. Catalyzes the conversion of Fe-coproporphyrin III into heme by the oxidative decarboxylation of two propionate side chains. This chain is AdoMet-dependent heme synthase, found in Oleidesulfovibrio alaskensis (strain ATCC BAA-1058 / DSM 17464 / G20) (Desulfovibrio alaskensis).